Here is a 2059-residue protein sequence, read N- to C-terminus: Desmoplakin-A (2059 aa).

Over residues 1 to 11 (MSLSGSQTRLH) the composition is skewed to polar residues. The disordered stretch occupies residues 1-25 (MSLSGSQTRLHQISRRSSSRPDLTA). 2 coiled-coil regions span residues 320-354 (IPQKQESYSKLMSDLEEKEKELNKLKAKVDMLLKN) and 397-453 (FKEA…VQTL). Residues 665–690 (EVSSGKTATGVSSGKTATGVSSGKTS) form a disordered region. A compositionally biased stretch (low complexity) spans 671–690 (TATGVSSGKTATGVSSGKTS). Coiled-coil stretches lie at residues 1062-1229 (MEEL…AELE) and 1261-1383 (LQQD…LQQR). 6 Plectin repeats span residues 1450–1488 (YLGGSDCIAGIYDEAKDRVMPFYQAMKDGLLRRGTTLEL), 1489–1526 (LEAQAASGFIIDPVNNVCMTVEEAWKRGLVGKEFKDKL), 1564–1602 (LLEAQIASGGIIDPKGSHRIDVEVAYRKGYFDREMNEIL), 1666–1694 (IVDPDTGKEMTVREAYHRELIDYDTFLEL), 1847–1885 (LLEAQVCSGGIINPATGQRLSLKDAVQQSLIDEDMSVKL), and 1923–1961 (FLEFQYLTGGLIEPGTGRRVSIEEAIRKGWLDGKGAQKL). The interval 2008-2059 (KGISSPYNVSSGPSSRSGSRAGSRTGSRSGSRRGSVDYSSSSVSYTFFSSAS) is disordered. The span at 2011 to 2059 (SSPYNVSSGPSSRSGSRAGSRTGSRSGSRRGSVDYSSSSVSYTFFSSAS) shows a compositional bias: low complexity.

This sequence belongs to the plakin or cytolinker family.

The protein localises to the cell junction. Its subcellular location is the desmosome. The protein resides in the cell membrane. Functionally, involved in the organization of desmosome cell-cell junctions. Of particular importance in cell adhesion in the skin and during cardiac development. May also play a role in the regulation of Wnt, TGF-beta and Hippo signaling pathways. The polypeptide is Desmoplakin-A (Danio rerio (Zebrafish)).